Consider the following 575-residue polypeptide: Arginine--tRNA ligase (575 aa).

Positions 136–146 (ANPTGPLHVGH) match the 'HIGH' region motif.

The protein belongs to the class-I aminoacyl-tRNA synthetase family. In terms of assembly, monomer.

The protein localises to the cytoplasm. It carries out the reaction tRNA(Arg) + L-arginine + ATP = L-arginyl-tRNA(Arg) + AMP + diphosphate. The protein is Arginine--tRNA ligase of Polynucleobacter necessarius subsp. necessarius (strain STIR1).